A 573-amino-acid chain; its full sequence is Chaperone Ric-8 (573 aa).

A compositionally biased stretch (basic and acidic residues) spans 308–324; that stretch reads ESHKEREQDNEKEKDTE. 2 disordered regions span residues 308 to 329 and 473 to 493; these read ESHK…GAGA and GTDY…QQQQ. Ser477, Ser478, Ser480, and Ser483 each carry phosphoserine.

This sequence belongs to the synembryn family. As to quaternary structure, interacts with GDP-bound G(i)-alpha protein G-i-alpha-65A. Does not interact with G-alpha proteins when they are in complex with subunits beta and gamma. Interacts with Frq2 in a Ca(2+)-independent manner but does not interact with Frq1. Expression in the embryo is primarily neural.

It localises to the cytoplasm. It is found in the cell cortex. The protein localises to the presynapse. In terms of biological role, chaperone that specifically binds and folds some, but not all, nascent G alpha proteins prior to G protein heterotrimer formation, promoting their stability and activity. Also acts as a guanine nucleotide exchange factor (GEF) for G alpha proteins by stimulating exchange of bound GDP for free GTP. Plays a key role in asymmetric spindle positioning, a step for asymmetric cell division that generates cell diversity during development by activating G(i) alpha protein independently of G-protein coupled receptors. Required during gastrulation and sensory organ precursor (SOP) formation. Plays a role in positively regulating synapse number and neurotransmitter release. The sequence is that of Chaperone Ric-8 (ric8a) from Drosophila melanogaster (Fruit fly).